Reading from the N-terminus, the 261-residue chain is Yop proteins translocation protein T (261 aa).

The next 7 helical transmembrane spans lie at 20 to 40, 44 to 64, 77 to 97, 131 to 151, 180 to 200, 214 to 234, and 239 to 259; these read FMAC…GVLL, IVCS…YIEV, IILG…LESA, TLIT…ALFH, ILLI…LAEF, VFVL…VIYC, and SHAS…IPVL.

The protein belongs to the FliR/MopE/SpaR family.

Its subcellular location is the cell membrane. Component of the yop secretion machinery. The protein is Yop proteins translocation protein T (yscT) of Yersinia pestis.